A 281-amino-acid polypeptide reads, in one-letter code: MNVLQGLLLGLIQGLTEFLPISSTAHLTLAGKWMGVVSAEHPEHWTAFIAVIQLGTMAAVLIYFARDVLDISLTFLEENVFRRMRFKDQSHVSKLGWYVILGSLPVATFGLVFKKVIEGSLTKSLIVISASLIVFGILLGVSEVVARFSKSIKRISWLDALVVGFAQVMALVPGASRSGTTITAGLFMGMTRETAARFSFLLSIPAVMASGLLEFRESLDFMGSQDFLVLASATLMSAVSGYLTIAFLLRFLRRHSTNVFVVYRVVLGGALLWMVFRHGVV.

The next 8 helical transmembrane spans lie at 1 to 21 (MNVLQGLLLGLIQGLTEFLPI), 45 to 65 (WTAFIAVIQLGTMAAVLIYFA), 93 to 113 (SKLGWYVILGSLPVATFGLVF), 125 to 145 (LIVISASLIVFGILLGVSEVV), 155 to 175 (ISWLDALVVGFAQVMALVPGA), 195 to 215 (AARFSFLLSIPAVMASGLLEF), 227 to 247 (FLVLASATLMSAVSGYLTIAF), and 256 to 276 (STNVFVVYRVVLGGALLWMVF).

Belongs to the UppP family.

Its subcellular location is the cell inner membrane. It catalyses the reaction di-trans,octa-cis-undecaprenyl diphosphate + H2O = di-trans,octa-cis-undecaprenyl phosphate + phosphate + H(+). Its function is as follows. Catalyzes the dephosphorylation of undecaprenyl diphosphate (UPP). Confers resistance to bacitracin. The protein is Undecaprenyl-diphosphatase of Syntrophobacter fumaroxidans (strain DSM 10017 / MPOB).